The primary structure comprises 847 residues: E4 SUMO-protein ligase PIAL1 (847 aa).

The tract at residues 113-271 is interacting domain (IND), required for interaction with MOM1 and PIAL2; the sequence is VNSPVTLISQ…EVVGSNSDCD (159 aa). The segment at 268 to 349 adopts an SP-RING-type zinc-finger fold; sequence SDCDIIEGPS…LRKILEEVGR (82 aa). Residues C299, H301, C322, and C325 each coordinate Zn(2+). Tandem repeats lie at residues 569-591, 592-614, 615-637, 638-659, 660-682, 683-705, and 706-728. Positions 569 to 728 are 7 X 23 AA approximate tandem repeats; the sequence is QRPVPSYIAH…LPVSYGGTTD (160 aa).

It belongs to the PIAL protein ligase family. As to quaternary structure, homodimer. Interacts with MOM1 and PIAL2 to form a high molecular mass complex which mediates transcriptional gene silencing at heterochromatin regions. In terms of tissue distribution, expressed in leaves, stems and flowers, and, at low levels, in siliques and old leaves.

The protein resides in the nucleus. It participates in protein modification; protein sumoylation. Together with MOM1 and PIAL2, regulates transcriptional gene silencing (TGS) independently of changes in DNA methylation. E4-type SUMO ligase that promotes SUMO chain formation in a SCE1-dependent manner and thus contributes to a pathway for proteolytic removal of sumoylation substrates. Involved in stress responses (e.g. osmotic, salt and abscisic acid ABA) and sulfur metabolism. This Arabidopsis thaliana (Mouse-ear cress) protein is E4 SUMO-protein ligase PIAL1.